Reading from the N-terminus, the 106-residue chain is 10 kDa heat shock protein, mitochondrial (106 aa).

S2 is modified (N-acetylserine). S31 is modified (phosphoserine).

This sequence belongs to the GroES chaperonin family. Homohexamer. The N-terminus is blocked.

The protein resides in the mitochondrion matrix. In terms of biological role, eukaryotic CPN10 homolog which is essential for mitochondrial protein biogenesis, together with CPN60. Binds to CPN60 in the presence of Mg-ATP and suppresses the ATPase activity of the latter. This is 10 kDa heat shock protein, mitochondrial (HSP10) from Saccharomyces cerevisiae (strain ATCC 204508 / S288c) (Baker's yeast).